The chain runs to 443 residues: Tol-Pal system protein TolB (443 aa).

Positions 1–33 are cleaved as a signal peptide; that stretch reads MKIGIINTKIRTVFSAFACMIAASLVCTMPARA.

It belongs to the TolB family. As to quaternary structure, the Tol-Pal system is composed of five core proteins: the inner membrane proteins TolA, TolQ and TolR, the periplasmic protein TolB and the outer membrane protein Pal. They form a network linking the inner and outer membranes and the peptidoglycan layer.

It localises to the periplasm. Its function is as follows. Part of the Tol-Pal system, which plays a role in outer membrane invagination during cell division and is important for maintaining outer membrane integrity. This chain is Tol-Pal system protein TolB, found in Brucella melitensis biotype 1 (strain ATCC 23456 / CCUG 17765 / NCTC 10094 / 16M).